The following is a 176-amino-acid chain: Ubiquinol-cytochrome c reductase iron-sulfur subunit (176 aa).

The chain crosses the membrane as a helical span at residues 15–36 (FLFVATGAAAAVGGAAALWPFI). The 88-residue stretch at 87–174 (ARAVNVASLP…YQFVSDTKIQ (88 aa)) folds into the Rieske domain. [2Fe-2S] cluster-binding residues include Cys-119, His-121, Cys-138, and His-141. The cysteines at positions 124 and 140 are disulfide-linked.

The protein belongs to the Rieske iron-sulfur protein family. In terms of assembly, the main subunits of complex b-c1 are: cytochrome b, cytochrome c1 and the Rieske protein. [2Fe-2S] cluster is required as a cofactor.

The protein resides in the cell membrane. It carries out the reaction a quinol + 2 Fe(III)-[cytochrome c](out) = a quinone + 2 Fe(II)-[cytochrome c](out) + 2 H(+)(out). Functionally, component of the ubiquinol-cytochrome c reductase complex (complex III or cytochrome b-c1 complex), which is a respiratory chain that generates an electrochemical potential coupled to ATP synthesis. In Bradyrhizobium diazoefficiens (strain JCM 10833 / BCRC 13528 / IAM 13628 / NBRC 14792 / USDA 110), this protein is Ubiquinol-cytochrome c reductase iron-sulfur subunit (petA).